The chain runs to 420 residues: Tyrosine-protein phosphatase non-receptor type 20 (420 aa).

The segment covering 1-11 (MSSPRDFRAEP) has biased composition (basic and acidic residues). Disordered stretches follow at residues 1-47 (MSSP…VFEN) and 68-108 (DVFE…SQAL). The segment covering 31 to 41 (LPSSSQENTPR) has biased composition (polar residues). Ser76 and Ser120 each carry phosphoserine. Positions 159–412 (IMQEFMALEL…HFCYDIVLEV (254 aa)) constitute a Tyrosine-protein phosphatase domain. Substrate-binding positions include Asp323, 353–359 (CSAGIGR), and Gln397. Catalysis depends on Cys353, which acts as the Phosphocysteine intermediate.

This sequence belongs to the protein-tyrosine phosphatase family. Non-receptor class subfamily. In terms of tissue distribution, present in many cell lines (at protein level). Widely expressed.

It is found in the nucleus. The protein resides in the cytoplasm. Its subcellular location is the cytoskeleton. It localises to the microtubule organizing center. The protein localises to the centrosome. It carries out the reaction O-phospho-L-tyrosyl-[protein] + H2O = L-tyrosyl-[protein] + phosphate. Tyrosine-protein phosphatase targeted to sites of actin polymerization in response of varied extracellular stimuli. Has tyrosine phosphatase activity towards various tyrosyl phosphorylated substrates. This chain is Tyrosine-protein phosphatase non-receptor type 20, found in Homo sapiens (Human).